The following is a 51-amino-acid chain: Large ribosomal subunit protein eL39 (51 aa).

Belongs to the eukaryotic ribosomal protein eL39 family.

This is Large ribosomal subunit protein eL39 from Methanococcus aeolicus (strain ATCC BAA-1280 / DSM 17508 / OCM 812 / Nankai-3).